The sequence spans 276 residues: Diaminopimelate epimerase (276 aa).

Positions 13, 46, and 66 each coordinate substrate. The active-site Proton donor is Cys-75. Substrate contacts are provided by residues 76 to 77, Asn-159, Asn-192, and 210 to 211; these read GN and ER. Residue Cys-219 is the Proton acceptor of the active site. 220 to 221 provides a ligand contact to substrate; it reads GT.

It belongs to the diaminopimelate epimerase family. As to quaternary structure, homodimer.

It localises to the cytoplasm. The catalysed reaction is (2S,6S)-2,6-diaminopimelate = meso-2,6-diaminopimelate. The protein operates within amino-acid biosynthesis; L-lysine biosynthesis via DAP pathway; DL-2,6-diaminopimelate from LL-2,6-diaminopimelate: step 1/1. Catalyzes the stereoinversion of LL-2,6-diaminopimelate (L,L-DAP) to meso-diaminopimelate (meso-DAP), a precursor of L-lysine and an essential component of the bacterial peptidoglycan. The chain is Diaminopimelate epimerase from Azotobacter vinelandii (strain DJ / ATCC BAA-1303).